The primary structure comprises 146 residues: Large ribosomal subunit protein bL19 (146 aa).

Belongs to the bacterial ribosomal protein bL19 family.

Functionally, this protein is located at the 30S-50S ribosomal subunit interface and may play a role in the structure and function of the aminoacyl-tRNA binding site. The sequence is that of Large ribosomal subunit protein bL19 from Bartonella henselae (strain ATCC 49882 / DSM 28221 / CCUG 30454 / Houston 1) (Rochalimaea henselae).